The chain runs to 579 residues: Putative laccase-9 (579 aa).

A signal peptide spans 1–27 (MGTAKLPALLWLLAGVVLALAVNPAHG). 2 Plastocyanin-like domains span residues 36–152 (FITE…PKRG) and 162–319 (KEIP…YTDS). 2 N-linked (GlcNAc...) asparagine glycosylation sites follow: asparagine 41 and asparagine 82. The Cu cation site is built by histidine 86 and histidine 88. Asparagine 114 is a glycosylation site (N-linked (GlcNAc...) asparagine). Cu cation is bound by residues histidine 131 and histidine 133. Residues asparagine 307, asparagine 405, and asparagine 446 are each glycosylated (N-linked (GlcNAc...) asparagine). Positions 436 to 563 (PTAFVDPPVN…DTVFIVKDGK (128 aa)) constitute a Plastocyanin-like 3 domain. Cu cation contacts are provided by histidine 480, histidine 483, and histidine 485. Asparagine 496 carries an N-linked (GlcNAc...) asparagine glycan. 5 residues coordinate Cu cation: histidine 542, cysteine 543, histidine 544, histidine 548, and methionine 553.

It belongs to the multicopper oxidase family. Cu cation serves as cofactor.

The protein resides in the secreted. Its subcellular location is the extracellular space. The protein localises to the apoplast. The catalysed reaction is 4 hydroquinone + O2 = 4 benzosemiquinone + 2 H2O. Functionally, lignin degradation and detoxification of lignin-derived products. The sequence is that of Putative laccase-9 (LAC9) from Oryza sativa subsp. japonica (Rice).